Here is a 100-residue protein sequence, read N- to C-terminus: MASVNIKPLEDKILVQANEAETTTASGLVIPDTAKEKPQEGTVVAVGPGRWDEDGEKRIPLDVAEGDTVIYSKYGGTEIKYNGEEYLILSARDVLAVVSK.

Belongs to the GroES chaperonin family. As to quaternary structure, heptamer of 7 subunits arranged in a ring. Interacts with the chaperonin GroEL.

Its subcellular location is the cytoplasm. Together with the chaperonin GroEL, plays an essential role in assisting protein folding. The GroEL-GroES system forms a nano-cage that allows encapsulation of the non-native substrate proteins and provides a physical environment optimized to promote and accelerate protein folding. GroES binds to the apical surface of the GroEL ring, thereby capping the opening of the GroEL channel. The polypeptide is Co-chaperonin GroES (Mycolicibacterium smegmatis (strain ATCC 700084 / mc(2)155) (Mycobacterium smegmatis)).